A 404-amino-acid chain; its full sequence is MVGFKTLALHLAAVLPALAAPVDKQATQVVPNSYIITLKQGASAASFHNHLSWVGDVHRRSVSKRDTTGVDKVFDLDGFTAYSGSFDAATLQEIKKSDEVAFVEPDQVWDLYTLSTQSGAPWGLGSISHRKPNSTDYVYDPAGLGADHYAYIIDTGLDTEHVEFEGRGTLGYNAYPNSQFIDKIGHGTHVAGTIAGKTYGVAKKASIVSVRVFDTGSVTRQSTTAIVLDGFSWAVKDITAKGRQAKSVISMSLGGGRSEAFNAAVEAAYQANILTVAAAGNSAWDASQYSPASAPNAITVGAIDVDNVMAWFSNYGPVVDVFAPGVAVESAWIGSSHAEHDVLDGTSMATPHVSGLVLYLKSLEGFASAAAVTDRIKALGTNDVVTGLEGTDSPNLIAFNGVTA.

The N-terminal stretch at 1 to 19 (MVGFKTLALHLAAVLPALA) is a signal peptide. Residues 20-112 (APVDKQATQV…VEPDQVWDLY (93 aa)) constitute a propeptide that is removed on maturation. The Inhibitor I9 domain occupies 33–111 (SYIITLKQGA…FVEPDQVWDL (79 aa)). A Peptidase S8 domain is found at 121–404 (PWGLGSISHR…NLIAFNGVTA (284 aa)). The N-linked (GlcNAc...) asparagine glycan is linked to N133. Catalysis depends on charge relay system residues D154, H186, and S347.

This sequence belongs to the peptidase S8 family.

It localises to the secreted. In Magnaporthiopsis poae (Kentucky bluegrass fungus), this protein is Subtilisin-like proteinase Mp1.